Here is a 207-residue protein sequence, read N- to C-terminus: Imidazoleglycerol-phosphate dehydratase (207 aa).

Belongs to the imidazoleglycerol-phosphate dehydratase family.

Its subcellular location is the cytoplasm. The catalysed reaction is D-erythro-1-(imidazol-4-yl)glycerol 3-phosphate = 3-(imidazol-4-yl)-2-oxopropyl phosphate + H2O. It functions in the pathway amino-acid biosynthesis; L-histidine biosynthesis; L-histidine from 5-phospho-alpha-D-ribose 1-diphosphate: step 6/9. The polypeptide is Imidazoleglycerol-phosphate dehydratase (hisB) (Azospirillum brasilense).